A 356-amino-acid polypeptide reads, in one-letter code: tRNA N6-adenosine threonylcarbamoyltransferase (356 aa).

2 residues coordinate Fe cation: histidine 115 and histidine 119. Residues 138 to 142 (LVSGG), aspartate 171, glycine 184, and asparagine 283 contribute to the substrate site. Aspartate 311 is a binding site for Fe cation.

Belongs to the KAE1 / TsaD family. Fe(2+) serves as cofactor.

It localises to the cytoplasm. It catalyses the reaction L-threonylcarbamoyladenylate + adenosine(37) in tRNA = N(6)-L-threonylcarbamoyladenosine(37) in tRNA + AMP + H(+). Required for the formation of a threonylcarbamoyl group on adenosine at position 37 (t(6)A37) in tRNAs that read codons beginning with adenine. Is involved in the transfer of the threonylcarbamoyl moiety of threonylcarbamoyl-AMP (TC-AMP) to the N6 group of A37, together with TsaE and TsaB. TsaD likely plays a direct catalytic role in this reaction. This is tRNA N6-adenosine threonylcarbamoyltransferase from Prochlorococcus marinus subsp. pastoris (strain CCMP1986 / NIES-2087 / MED4).